A 662-amino-acid chain; its full sequence is MTSKAVVFAYHDIGCTGIEALLNAGYEIAAVFTHADDPRENTFYASVARLCAERGIALHAPEDVNHPLWLERIRQLRPDFLFSFYYRRLLGAELLACAARGAYNLHGSLLPRYRGRAPANWVLVNGETQTGVTLHRMVERADAGPILAQQAVAIDPEDTALSLHGKLRKAAGALLRDSLPLLALGVLPEVEQDESQASHFGRRTAADGLLDWHRPARQLYDLVRAVTQPYPGAFCQVGEQKLIVWSAEVVAGNHGREPGSVLSCDPLRIACGEDSLVLRFGQRGERGLYLAGTQLATELGLVEGARLRGPASGPQRRTRVLILGVNGFIGNHLSERLLRDGRYEVHGMDIGSDAIERLKADPHFHFVEGDIGIHSEWLEYHVKKCDVILPLVAIATPIEYTRNPLRVFELDFEENLRIVRYCVKYGKRVVFPSTSEVYGMCQDPDFDEDRSNLVVGPINKQRWIYSVSKQLLDRVIWAYGQQGLRFTLFRPFNWMGPRLDRLESARIGSSRAITQLILHLVEGTPIRLVDGGAQKRCFTDVDDGIEALARIIDNRDGRCDGQIVNIGNPDNEASIRQLGEELLRQFEAHPLRAQFPPFAGFREVESRSFYGDGYQDVAHRKPSIENARRLLDWQPAIELRETIGKTLDFFLHEALREREAQA.

The segment at 1–307 (MTSKAVVFAY…ELGLVEGARL (307 aa)) is formyltransferase ArnAFT. The active-site Proton donor; for formyltransferase activity is the histidine 106. (6R)-10-formyltetrahydrofolate is bound by residues arginine 116 and 138–142 (VERAD). The interval 316-662 (RRTRVLILGV…EALREREAQA (347 aa)) is dehydrogenase ArnADH. Residues aspartate 349 and 370–371 (DI) each bind NAD(+). Residues alanine 395, tyrosine 400, and 434 to 435 (TS) each bind UDP-alpha-D-glucuronate. Catalysis depends on glutamate 436, which acts as the Proton acceptor; for decarboxylase activity. UDP-alpha-D-glucuronate contacts are provided by residues arginine 462, asparagine 493, 527-536 (RLVDGGAQKR), and tyrosine 614. The Proton donor; for decarboxylase activity role is filled by arginine 620.

This sequence in the N-terminal section; belongs to the Fmt family. UDP-L-Ara4N formyltransferase subfamily. The protein in the C-terminal section; belongs to the NAD(P)-dependent epimerase/dehydratase family. UDP-glucuronic acid decarboxylase subfamily. Homohexamer, formed by a dimer of trimers.

The catalysed reaction is UDP-alpha-D-glucuronate + NAD(+) = UDP-beta-L-threo-pentopyranos-4-ulose + CO2 + NADH. The enzyme catalyses UDP-4-amino-4-deoxy-beta-L-arabinose + (6R)-10-formyltetrahydrofolate = UDP-4-deoxy-4-formamido-beta-L-arabinose + (6S)-5,6,7,8-tetrahydrofolate + H(+). It functions in the pathway nucleotide-sugar biosynthesis; UDP-4-deoxy-4-formamido-beta-L-arabinose biosynthesis; UDP-4-deoxy-4-formamido-beta-L-arabinose from UDP-alpha-D-glucuronate: step 1/3. It participates in nucleotide-sugar biosynthesis; UDP-4-deoxy-4-formamido-beta-L-arabinose biosynthesis; UDP-4-deoxy-4-formamido-beta-L-arabinose from UDP-alpha-D-glucuronate: step 3/3. The protein operates within bacterial outer membrane biogenesis; lipopolysaccharide biosynthesis. Its function is as follows. Bifunctional enzyme that catalyzes the oxidative decarboxylation of UDP-glucuronic acid (UDP-GlcUA) to UDP-4-keto-arabinose (UDP-Ara4O) and the addition of a formyl group to UDP-4-amino-4-deoxy-L-arabinose (UDP-L-Ara4N) to form UDP-L-4-formamido-arabinose (UDP-L-Ara4FN). The modified arabinose is attached to lipid A and is required for resistance to polymyxin and cationic antimicrobial peptides. In Pseudomonas paraeruginosa (strain DSM 24068 / PA7) (Pseudomonas aeruginosa (strain PA7)), this protein is Bifunctional polymyxin resistance protein ArnA.